We begin with the raw amino-acid sequence, 950 residues long: MSKKRVHELGKQLKEQGIELSNQELVEKLHALGYLEVKSHSSSLEDDQAHAAYEKILAERKPKPAPARPSGPGFVVRKRAHVEPPTVTAPAAPPSPEPEYAEPQYAEPQAEQAYEPEPQAAQPEAGAEPAAAPEPPAEAAPLAAQAAPSPGAEAAAPAAPQAQPAQPAAPAAPPAPTAQPSAPPPAAAQPRPPQPSAPSRPPPPGYRPAPPPGARPPVSAAPGAPGQPGAAGQPPRPPVDPRTLRPTSTQAVVISRPLVPVRRVTPPTSARQQFPVAPGPRALGEVRELKVVPGSLGREREFIDVSRDKRRGRQPGRPISEEQAKSLSGKELLQAAISDRAYIPIRGKKKKPTKKGAKTQITEKAEHKKVIRIEESISVSELSQVMGVKASDLIRKLMQMGKMVTINAQIDADTAATLALEHGYTVEKKGFEVEEFIPEVEVDESKLVIRPPVVTVMGHVDHGKTSLLDAIRQADVAAGEAGGITQHIGAYSVNTPQGPITFLDTPGHEAFTAMRQRGAQVTDLVVLVVAADDGVMPQTVESIKAAKAAGVTILVAINKVDKPQAAPERVMQQLTEYELVAEQWGGTTIMLPVSARTKQGIPELLEYIALQSEVLELKANPDKLAAGRVIEAKLEKGRGPVATVLVEEGTLRVGDALVTGVHFGRVRAMMNERGEQVDNVGPGYPVEVLGLSGVPVAGDEFDVVEDEKAAKEVAQHRATKQRQKELGGVKKATLEDLFAKAKTSAQKVLNLVVKADVQGSSEAVSQALEKAATKKVGVKILESAVGAITKSDVLTAAAGNAVIVGFNTKPETEIENIASQQGVKILMFGIIYEAVDRIREEMAGLLEPIIKEKPLGKAEVRQVFNIPRVGQIAGSAVTEGVVKRAGHVRVVRDRKVVFTGKIGSLKRVKDDVREVAQGFECGIGVDGFSDVKQGDVLEVYELEEIRQSLD.

Disordered stretches follow at residues 57–254 (LAER…AVVI) and 304–328 (DVSRDKRRGRQPGRPISEEQAKSLS). Low complexity-rich tracts occupy residues 101–131 (AEPQYAEPQAEQAYEPEPQAAQPEAGAEPAA) and 139–169 (AAPLAAQAAPSPGAEAAAPAAPQAQPAQPAA). A compositionally biased stretch (pro residues) spans 170 to 215 (PAAPPAPTAQPSAPPPAAAQPRPPQPSAPSRPPPPGYRPAPPPGAR). Residues 216–233 (PPVSAAPGAPGQPGAAGQ) are compositionally biased toward low complexity. In terms of domain architecture, tr-type G spans 449–618 (IRPPVVTVMG…ALQSEVLELK (170 aa)). The interval 458-465 (GHVDHGKT) is G1. Position 458-465 (458-465 (GHVDHGKT)) interacts with GTP. The tract at residues 483-487 (GITQH) is G2. Positions 504–507 (DTPG) are G3. Residues 504–508 (DTPGH) and 558–561 (NKVD) contribute to the GTP site. The interval 558 to 561 (NKVD) is G4. The G5 stretch occupies residues 594-596 (SAR).

The protein belongs to the TRAFAC class translation factor GTPase superfamily. Classic translation factor GTPase family. IF-2 subfamily.

The protein resides in the cytoplasm. One of the essential components for the initiation of protein synthesis. Protects formylmethionyl-tRNA from spontaneous hydrolysis and promotes its binding to the 30S ribosomal subunits. Also involved in the hydrolysis of GTP during the formation of the 70S ribosomal complex. The chain is Translation initiation factor IF-2 from Anaeromyxobacter dehalogenans (strain 2CP-C).